Consider the following 215-residue polypeptide: Large ribosomal subunit protein uL3 (215 aa).

Residues Gly-136 to Lys-155 are disordered. Gln-151 bears the N5-methylglutamine mark.

This sequence belongs to the universal ribosomal protein uL3 family. As to quaternary structure, part of the 50S ribosomal subunit. Forms a cluster with proteins L14 and L19. Methylated by PrmB.

In terms of biological role, one of the primary rRNA binding proteins, it binds directly near the 3'-end of the 23S rRNA, where it nucleates assembly of the 50S subunit. This is Large ribosomal subunit protein uL3 from Rickettsia conorii (strain ATCC VR-613 / Malish 7).